A 129-amino-acid polypeptide reads, in one-letter code: Small ribosomal subunit protein uS11 (129 aa).

The protein belongs to the universal ribosomal protein uS11 family. Part of the 30S ribosomal subunit. Interacts with proteins S7 and S18. Binds to IF-3.

In terms of biological role, located on the platform of the 30S subunit, it bridges several disparate RNA helices of the 16S rRNA. Forms part of the Shine-Dalgarno cleft in the 70S ribosome. The polypeptide is Small ribosomal subunit protein uS11 (Bacillus mycoides (strain KBAB4) (Bacillus weihenstephanensis)).